The following is a 601-amino-acid chain: Ubiquitin carboxyl-terminal hydrolase MINDY-2 (601 aa).

The segment at methionine 1–alanine 205 is disordered. Residues glutamate 24–glutamate 34 are compositionally biased toward basic and acidic residues. Threonine 62 carries the phosphothreonine modification. At serine 82 the chain carries Phosphoserine. Composition is skewed to low complexity over residues glutamate 127–glutamate 141, serine 148–phenylalanine 169, and glycine 186–proline 195. Cysteine 244 serves as the catalytic Nucleophile. The active-site Proton acceptor is the histidine 426. The interval glycine 485–glutamine 537 is ubiquitin-binding domain (UBD). A disordered region spans residues arginine 534–leucine 601. Positions serine 536–serine 570 are enriched in low complexity. Over residues serine 577 to leucine 601 the composition is skewed to basic and acidic residues.

It belongs to the MINDY deubiquitinase family. FAM63 subfamily.

It catalyses the reaction Thiol-dependent hydrolysis of ester, thioester, amide, peptide and isopeptide bonds formed by the C-terminal Gly of ubiquitin (a 76-residue protein attached to proteins as an intracellular targeting signal).. Its function is as follows. Hydrolase that can remove 'Lys-48'-linked conjugated ubiquitin from proteins. Can also bind to polyubiquitin chains of different linkage types, including 'Lys-6', 'Lys-11', 'Lys-29', 'Lys-33' and 'Lys-63'. May play a regulatory role at the level of protein turnover. The sequence is that of Ubiquitin carboxyl-terminal hydrolase MINDY-2 (Mindy2) from Mus musculus (Mouse).